A 96-amino-acid polypeptide reads, in one-letter code: uncharacterized protein (96 aa).

3 helical membrane passes run 14–34 (FIEG…KYWA), 38–58 (LAVT…LLVL), and 67–87 (WPLK…GNFL).

It localises to the cell membrane. This is an uncharacterized protein from Bacillus subtilis (strain 168).